Here is a 353-residue protein sequence, read N- to C-terminus: 3'(2'),5'-bisphosphate nucleotidase 1 (353 aa).

Residue aspartate 46 is the Proton acceptor of the active site. Positions 71, 134, 136, and 137 each coordinate Mg(2+). Residue threonine 139 is the Proton acceptor of the active site. Adenosine 3',5'-bisphosphate contacts are provided by threonine 139, histidine 235, serine 259, lysine 262, arginine 276, and aspartate 288. AMP is bound by residues histidine 235, serine 259, lysine 262, arginine 276, and aspartate 288. Aspartate 288 is a Mg(2+) binding site.

Belongs to the inositol monophosphatase superfamily. Mg(2+) is required as a cofactor. Expressed in roots, leaves, stems, flowers and siliques.

The catalysed reaction is 3'-phosphoadenylyl sulfate + H2O = adenosine 5'-phosphosulfate + phosphate. The enzyme catalyses adenosine 3',5'-bisphosphate + H2O = AMP + phosphate. It catalyses the reaction adenosine 2',5'-bisphosphate + H2O = AMP + phosphate. It carries out the reaction 1D-myo-inositol 1,4-bisphosphate + H2O = 1D-myo-inositol 4-phosphate + phosphate. The catalysed reaction is 1D-myo-inositol 1,3,4-trisphosphate + H2O = 1D-myo-inositol 3,4-bisphosphate + phosphate. The protein operates within signal transduction; phosphatidylinositol signaling pathway. Inhibited non-competitively by Li(+) (IC(50)=0.20 mM) and Na(+) (IC(50)=200 mM). Phosphatase that converts adenosine 3'-phosphate 5'-phosphosulfate (PAPS) to adenosine 5'-phosphosulfate (APS) and 3'(2')-phosphoadenosine 5'-phosphate (PAP) to AMP. May regulate the flux of sulfur in the sulfur-activation pathway by converting PAPS to APS. May play a role in the biosynthesis of sulfate conjugates and RNA processing. Is also able to hydrolyze inositol 1,4-bisphosphate and inositol 1,3,4-trisphosphate. Could be considered as a negative regulator of abscisic acid (ABA)- and stress-responsive genes, through modulating the inositol 1,4,5-trisphosphate (IP3) turnover. Is also involved in salt tolerance. Acts as a suppressor of virus- and transgene-induced silencing. The protein is 3'(2'),5'-bisphosphate nucleotidase 1 of Arabidopsis thaliana (Mouse-ear cress).